The following is a 244-amino-acid chain: Protein A47 (244 aa).

This sequence belongs to the orthopoxvirus A47 protein family.

In Homo sapiens (Human), this protein is Protein A47.